Reading from the N-terminus, the 469-residue chain is 3-isopropylmalate dehydratase large subunit (469 aa).

The [4Fe-4S] cluster site is built by C347, C410, and C413.

This sequence belongs to the aconitase/IPM isomerase family. LeuC type 1 subfamily. As to quaternary structure, heterodimer of LeuC and LeuD. [4Fe-4S] cluster serves as cofactor.

The catalysed reaction is (2R,3S)-3-isopropylmalate = (2S)-2-isopropylmalate. Its pathway is amino-acid biosynthesis; L-leucine biosynthesis; L-leucine from 3-methyl-2-oxobutanoate: step 2/4. Its function is as follows. Catalyzes the isomerization between 2-isopropylmalate and 3-isopropylmalate, via the formation of 2-isopropylmaleate. The chain is 3-isopropylmalate dehydratase large subunit from Burkholderia ambifaria (strain MC40-6).